The primary structure comprises 120 residues: Large ribosomal subunit protein uL18 (120 aa).

It belongs to the universal ribosomal protein uL18 family. In terms of assembly, part of the 50S ribosomal subunit; part of the 5S rRNA/L5/L18/L25 subcomplex. Contacts the 5S and 23S rRNAs.

This is one of the proteins that bind and probably mediate the attachment of the 5S RNA into the large ribosomal subunit, where it forms part of the central protuberance. This Chloroflexus aggregans (strain MD-66 / DSM 9485) protein is Large ribosomal subunit protein uL18.